The following is a 283-amino-acid chain: Nucleoid occlusion protein (283 aa).

Positions 1–26 (MKQPFSRLFGFGDKQDQEMETGKQEE) are disordered. The span at 13–26 (DKQDQEMETGKQEE) shows a compositional bias: basic and acidic residues. The H-T-H motif DNA-binding region spans 143 to 162 (ESLAQRLGKGQSTIANKLRL).

It belongs to the ParB family.

The protein localises to the cytoplasm. Its subcellular location is the nucleoid. Functionally, effects nucleoid occlusion by binding relatively nonspecifically to DNA and preventing the assembly of the division machinery in the vicinity of the nucleoid, especially under conditions that disturb the cell cycle. It helps to coordinate cell division and chromosome segregation by preventing the formation of the Z ring through the nucleoid, which would cause chromosome breakage. The chain is Nucleoid occlusion protein from Halalkalibacterium halodurans (strain ATCC BAA-125 / DSM 18197 / FERM 7344 / JCM 9153 / C-125) (Bacillus halodurans).